Consider the following 619-residue polypeptide: UvrABC system protein C (619 aa).

One can recognise a GIY-YIG domain in the interval 20–98 (TAPGVYRMYA…IKSLSPRYNV (79 aa)). A UVR domain is found at 207 to 242 (DQLGEEIMHSMQQASEALEFERAARLRDLLSSLRSM).

The protein belongs to the UvrC family. Interacts with UvrB in an incision complex.

It localises to the cytoplasm. In terms of biological role, the UvrABC repair system catalyzes the recognition and processing of DNA lesions. UvrC both incises the 5' and 3' sides of the lesion. The N-terminal half is responsible for the 3' incision and the C-terminal half is responsible for the 5' incision. This chain is UvrABC system protein C, found in Xanthomonas axonopodis pv. citri (strain 306).